The primary structure comprises 184 residues: Isopentenyl-diphosphate Delta-isomerase (184 aa).

The Mn(2+) site is built by histidine 26 and histidine 33. The region spanning 31–165 is the Nudix hydrolase domain; the sequence is PLHLAFSCYL…PSAFSPWLGL (135 aa). The active site involves cysteine 68. A Mn(2+)-binding site is contributed by histidine 70. A Mg(2+)-binding site is contributed by glutamate 88. 2 residues coordinate Mn(2+): glutamate 115 and glutamate 117. Residue glutamate 117 is part of the active site.

Belongs to the IPP isomerase type 1 family. Mg(2+) serves as cofactor. It depends on Mn(2+) as a cofactor.

Its subcellular location is the cytoplasm. It catalyses the reaction isopentenyl diphosphate = dimethylallyl diphosphate. The protein operates within isoprenoid biosynthesis; dimethylallyl diphosphate biosynthesis; dimethylallyl diphosphate from isopentenyl diphosphate: step 1/1. Catalyzes the 1,3-allylic rearrangement of the homoallylic substrate isopentenyl (IPP) to its highly electrophilic allylic isomer, dimethylallyl diphosphate (DMAPP). The polypeptide is Isopentenyl-diphosphate Delta-isomerase (Paenarthrobacter aurescens (strain TC1)).